A 430-amino-acid polypeptide reads, in one-letter code: Functional amyloid transporter FapF (430 aa).

The N-terminal stretch at 1–24 is a signal peptide; that stretch reads MHRSLSLRAVVCLSTLLPASLLYA. Over 25-131 the chain is Periplasmic; sequence APDVDIETLK…EASGFFGNGK (107 aa). Residues 29–64 adopt a coiled-coil conformation; it reads DIETLKQELLELKQRYEAQQKALAVLEQRVRQVEDQ. The segment at 62–114 is disordered; that stretch reads EDQPATPAPKRLAKSPADFKQSGSTVAASSGTGGATGGSSYGQSLKDDSEPAQ. Residues 92-101 show a composition bias toward gly residues; it reads GTGGATGGSS. The alpha helical plug stretch occupies residues 113–125; that stretch reads AQSVSNLYNEASG. The beta stranded transmembrane segment at 132-142 threads the bilayer; that stretch reads FSFETGITYAR. At 143-172 the chain is on the extracellular side; the sequence is YDARQLTLNGFLALDSIFLGNINLDRIKAD. A beta stranded membrane pass occupies residues 173-183; the sequence is NWTLDLTGRYN. Residues 184-189 are Periplasmic-facing; the sequence is LDNRWQ. A beta stranded transmembrane segment spans residues 190–198; it reads FDVNVPVVY. Over 199 to 224 the chain is Extracellular; sequence RESTYQSGGASGGDPQATSEESVSRD. The segment at 203-223 is disordered; it reads YQSGGASGGDPQATSEESVSR. A beta stranded membrane pass occupies residues 225 to 238; sequence PTIGDVNFGIAYKF. Topologically, residues 239 to 246 are periplasmic; the sequence is LDESATMP. A beta stranded membrane pass occupies residues 247–256; the sequence is DAVVSVRVKA. At 257 to 288 the chain is on the extracellular side; that stretch reads PTGKEPFGIKLVRSTANDNLYVPESLPTGNGV. The beta stranded transmembrane segment at 289–298 threads the bilayer; the sequence is WSITPGLSLV. At 299-304 the chain is on the periplasmic side; the sequence is KTFDPA. A beta stranded membrane pass occupies residues 305–314; that stretch reads VLFGSVSYTH. Topologically, residues 315–339 are extracellular; sequence NLEDSFDDISSDVNQKVGGKVRLGD. Residues 340–348 form a beta stranded membrane-spanning segment; that stretch reads SFQFGVGVA. Residues 349–356 lie on the Periplasmic side of the membrane; sequence FALNERMS. A beta stranded transmembrane segment spans residues 357–365; the sequence is MSFSVSDLI. The Extracellular portion of the chain corresponds to 366–386; it reads QRKSKLKPDGGGWQSIVSSDA. A beta stranded membrane pass occupies residues 387-397; it reads NAGYFNVGMTI. At 398–404 the chain is on the periplasmic side; that stretch reads AASENLT. A beta stranded membrane pass occupies residues 405-412; the sequence is IVPNLAIG. The Extracellular portion of the chain corresponds to 413–419; it reads MTDDAPD. The chain crosses the membrane as a beta stranded span at residues 420 to 428; that stretch reads FTFSLKFPY. Residues 429 to 430 are Periplasmic-facing; sequence YF.

Belongs to the amyloid transporter (TC 9.B.153) family. In terms of assembly, homotrimer.

The protein resides in the cell outer membrane. Its function is as follows. Transports fibril components across the outer membrane. Upon overexpression of the endogenous six-gene locus (fapA-fapF) in situ cells form large clumps during liquid growth, make large amounts of biofilm and produce amyloid fibrils. Expression of the 6 gene operon in E.coli strain BL21(DE3) induces flocculation and biofilm formation with copious extracellular fibrils. This chain is Functional amyloid transporter FapF, found in Pseudomonas fluorescens.